The chain runs to 331 residues: CRISPR-associated endonuclease Cas1 1 (331 aa).

Positions 161, 226, and 241 each coordinate Mn(2+).

It belongs to the CRISPR-associated endonuclease Cas1 family. In terms of assembly, homodimer, forms a heterotetramer with a Cas2 homodimer. Mg(2+) is required as a cofactor. It depends on Mn(2+) as a cofactor.

In terms of biological role, CRISPR (clustered regularly interspaced short palindromic repeat), is an adaptive immune system that provides protection against mobile genetic elements (viruses, transposable elements and conjugative plasmids). CRISPR clusters contain spacers, sequences complementary to antecedent mobile elements, and target invading nucleic acids. CRISPR clusters are transcribed and processed into CRISPR RNA (crRNA). Acts as a dsDNA endonuclease. Involved in the integration of spacer DNA into the CRISPR cassette. This chain is CRISPR-associated endonuclease Cas1 1, found in Methanospirillum hungatei JF-1 (strain ATCC 27890 / DSM 864 / NBRC 100397 / JF-1).